The chain runs to 311 residues: Protein lifeguard 3 (311 aa).

2 disordered regions span residues M1 to P37 and P50 to G72. Positions Y53–P62 are enriched in pro residues. Residues S81 and S83 each carry the phosphoserine modification. The next 7 membrane-spanning stretches (helical) occupy residues L110–V130, V134–C154, I165–M185, A190–F210, G221–L241, V246–A266, and I286–L306.

It belongs to the BI1 family. LFG subfamily.

It localises to the membrane. It is found in the lysosome membrane. The protein localises to the endosome membrane. Functionally, negatively regulates aortic matrix metalloproteinase-9 (MMP9) production and may play a protective role in vascular remodeling. In Homo sapiens (Human), this protein is Protein lifeguard 3 (TMBIM1).